A 386-amino-acid polypeptide reads, in one-letter code: Zinc transporter 7-A (386 aa).

Residues 1 to 37 lie on the Cytoplasmic side of the membrane; that stretch reads MLPLSIKDDEYKPPKFNLARKVSGWIRSIFSDSTSRN. A helical transmembrane segment spans residues 38-58; the sequence is LFCFLCLNLSFAFVELFYGIW. At 59-67 the chain is on the lumenal side; it reads SNSLGLISD. The chain crosses the membrane as a helical span at residues 68–88; it reads SFHMFFDCTALLAGLAASVIS. Topologically, residues 89–102 are cytoplasmic; it reads RWKTNEAFSYGYVR. A helical transmembrane segment spans residues 103-123; the sequence is AEVLAGFVNGLFLIFTAFFIF. The Lumenal portion of the chain corresponds to 124-140; the sequence is SEGVERALDTPEVHHER. The chain crosses the membrane as a helical span at residues 141-161; the sequence is LLPVSIMGLLVNIIGIFVFQH. The segment at 161 to 222 is his-rich loop; the sequence is HGGGHGHSHE…GHSHDHSPKH (62 aa). Residues 162–246 are Cytoplasmic-facing; sequence GGGHGHSHES…KGSSKQILEG (85 aa). Positions 167–239 are disordered; the sequence is HSHESGHGHS…DEPPEEHKGS (73 aa). Over residues 228 to 238 the composition is skewed to basic and acidic residues; the sequence is CHDEPPEEHKG. The helical transmembrane segment at 247 to 267 threads the bilayer; sequence VFLHIVADTLGSVGVIFSTIL. The Lumenal segment spans residues 268–272; it reads MQRYG. The helical transmembrane segment at 273-293 threads the bilayer; it reads LMIADPICSMLIALLIFVSVI. The Cytoplasmic portion of the chain corresponds to 294–386; sequence PLLKQSIGIL…LYVQIDFAAI (93 aa).

Belongs to the cation diffusion facilitator (CDF) transporter (TC 2.A.4) family. SLC30A subfamily. As to quaternary structure, homooligomer.

The protein localises to the golgi apparatus membrane. The protein resides in the cytoplasmic vesicle. It is found in the golgi apparatus. It localises to the trans-Golgi network. Its subcellular location is the sarcoplasmic reticulum. The protein localises to the mitochondrion. The catalysed reaction is Zn(2+)(in) = Zn(2+)(out). In terms of biological role, zinc ion transporter mediating zinc entry from the cytosol into the lumen of organelles along the secretory pathway. By contributing to zinc ion homeostasis within the early secretory pathway, regulates the activation and folding of enzymes like alkaline phosphatases. The sequence is that of Zinc transporter 7-A (slc30a7-a) from Xenopus laevis (African clawed frog).